Here is a 296-residue protein sequence, read N- to C-terminus: Splicing factor U2af small subunit A (296 aa).

A C3H1-type 1 zinc finger spans residues 12–40 (EKDRVNCPFYFKIGACRHGDRCSRLHNRP). Residues 44 to 146 (PTLLLSNMYQ…RPIIADFSPV (103 aa)) enclose the RRM domain. The segment at 148–175 (DFREATCRQYEENNCNRGGYCNFMHVKL) adopts a C3H1-type 2 zinc-finger fold. Basic residues predominate over residues 191–202 (SYRRGSRSRSRS). The disordered stretch occupies residues 191–296 (SYRRGSRSRS…EREEKEEGGA (106 aa)). Composition is skewed to basic and acidic residues over residues 209-254 (NKRD…DGSR) and 272-296 (EGSE…EGGA).

Belongs to the splicing factor SR family. As to quaternary structure, component of the spliceosome. Homo- and heterodimer. Interacts with U2AF35B, RNU1 and SR45.

It is found in the nucleus speckle. Functionally, necessary for the splicing of pre-mRNA. Probably active at the 3' splice sites. The chain is Splicing factor U2af small subunit A from Arabidopsis thaliana (Mouse-ear cress).